A 273-amino-acid polypeptide reads, in one-letter code: Putative phosphoenolpyruvate synthase regulatory protein (273 aa).

Position 153 to 160 (153 to 160 (GVSRSGKT)) interacts with ADP.

This sequence belongs to the pyruvate, phosphate/water dikinase regulatory protein family. PSRP subfamily.

The catalysed reaction is [pyruvate, water dikinase] + ADP = [pyruvate, water dikinase]-phosphate + AMP + H(+). It carries out the reaction [pyruvate, water dikinase]-phosphate + phosphate + H(+) = [pyruvate, water dikinase] + diphosphate. Bifunctional serine/threonine kinase and phosphorylase involved in the regulation of the phosphoenolpyruvate synthase (PEPS) by catalyzing its phosphorylation/dephosphorylation. The chain is Putative phosphoenolpyruvate synthase regulatory protein from Leptothrix cholodnii (strain ATCC 51168 / LMG 8142 / SP-6) (Leptothrix discophora (strain SP-6)).